The following is a 300-amino-acid chain: Small ribosomal subunit protein uS2 (300 aa).

The disordered stretch occupies residues 228–300; it reads RAGLSADKDA…PAAEAPSTEA (73 aa). The span at 258–300 shows a compositional bias: low complexity; that stretch reads AAPAAEAAPAAEAAPAAEAAPAAEAQAAPAAEAPAAEAPSTEA.

It belongs to the universal ribosomal protein uS2 family.

This chain is Small ribosomal subunit protein uS2, found in Rhodococcus jostii (strain RHA1).